The chain runs to 461 residues: MLKIFNTLSRQKEEFKPIHAGKVGMYVCGVTIYDLCHIGHGRTFVAFDVVARYLRYLGYSLNYVRNVTDVDDKIIRRATENGESCDQLTTRMLAEMHADFDSLLIERPDIEPRATQHIAEIVEITQRLIDRGHAYVASNGDVMFSIDSDPQYGLLSRQDLDQLQAGARVEIDDVKRNPMDFVLWKMSKPGEPSWESPWGAGRPGWHIECSAMNCKQLGTHFDIHGGGSDLMFPHHENEIAQSSCAHDGPYVNYWMHSGMVMIDKEKMSKSLDNFFTIRDVLGYYDAETVRYFLMSGHYRSQLNYSEENLKQARTALERLYTALRGTDVNAQPAGGEVFEARFREAMDDDFNTPEAYSALFDLAREVNRLKAEDLTAANGLAAELRKLAKVLGLLQQEPELFLQGGAQADDGEVAEIEALIKQRNDARKAKDWALADAARDRLNEMNIVLEDGPQGTTWRRK.

Cys28 lines the Zn(2+) pocket. A 'HIGH' region motif is present at residues 30–40 (VTIYDLCHIGH). Residues Cys209, His234, and Glu238 each contribute to the Zn(2+) site. The 'KMSKS' region signature appears at 266–270 (KMSKS). Lys269 serves as a coordination point for ATP.

The protein belongs to the class-I aminoacyl-tRNA synthetase family. In terms of assembly, monomer. Zn(2+) is required as a cofactor.

It is found in the cytoplasm. It catalyses the reaction tRNA(Cys) + L-cysteine + ATP = L-cysteinyl-tRNA(Cys) + AMP + diphosphate. This Serratia proteamaculans (strain 568) protein is Cysteine--tRNA ligase.